The primary structure comprises 662 residues: Polyunsaturated fatty acid (12S)/(13S)-lipoxygenase, epidermal-type (662 aa).

One can recognise a PLAT domain in the interval glycine 2–leucine 114. Residues leucine 114 to isoleucine 662 form the Lipoxygenase domain. Fe cation is bound by residues histidine 360, histidine 365, histidine 540, histidine 544, and isoleucine 662.

It belongs to the lipoxygenase family. Requires Fe cation as cofactor.

The protein localises to the cytoplasm. The catalysed reaction is (5Z,8Z,11Z,14Z)-eicosatetraenoate + O2 = (12S)-hydroperoxy-(5Z,8Z,10E,14Z)-eicosatetraenoate. It carries out the reaction 1-O-methyl-(9Z,12Z)-octadecadienoate + O2 = 1-O-methyl-(13S)-hydroperoxy-(9Z,11E)-octadecadienoate. It catalyses the reaction (8Z,11Z,14Z)-eicosatrienoate + O2 = (12S)-hydroperoxy-(8Z,10E,14Z)-eicosatrienoate. The enzyme catalyses (5Z,8Z,11Z)-eicosatrienoate + O2 = (12S)-hydroperoxy-(5Z,8Z,10E)-eicosatrienoate. The catalysed reaction is 1-O-methyl-(5Z,8Z,11Z,14Z)-eicosatetraenoate + O2 = 1-O-methyl-(12S)-hydroperoxy-(5Z,8Z,10E,14Z)-eicosatetraenoate. It carries out the reaction (9Z,12Z)-octadecadienoate + O2 = (13S)-hydroperoxy-(9Z,11E)-octadecadienoate. It catalyses the reaction (4Z,7Z,10Z,13Z,16Z,19Z)-docosahexaenoate + O2 = (14S)-hydroperoxy-(4Z,7Z,10Z,12E,16Z,19Z)-docosahexaenoate. Its pathway is lipid metabolism; hydroperoxy eicosatetraenoic acid biosynthesis. Arachidonate 12-lipoxygenase activity is decreased when the pH decreases from 7.4 to 6.0. Catalyzes the regio and stereo-specific incorporation of a single molecule of dioxygen into free and esterified polyunsaturated fatty acids generating lipid hydroperoxides that can be further reduced to the corresponding hydroxy species. Shows increasing catalytic activity within the series arachidonic acid &lt; 5,8,11-eicosatrienoic acid &lt; linoleic acid &lt; 8,11,14-eicosatrienoic acid. In Rattus norvegicus (Rat), this protein is Polyunsaturated fatty acid (12S)/(13S)-lipoxygenase, epidermal-type.